The sequence spans 146 residues: Hemoglobin subunit beta/beta' (146 aa).

Residues 2-146 (HWSAEEKQLI…VAHALARKYH (145 aa)) form the Globin domain. His63 and His92 together coordinate heme b.

It belongs to the globin family. As to quaternary structure, heterotetramer of two alpha chains and two beta chains. As to expression, red blood cells.

In terms of biological role, involved in oxygen transport from the lung to the various peripheral tissues. The polypeptide is Hemoglobin subunit beta/beta' (HBB) (Chroicocephalus ridibundus (Black-headed gull)).